The following is a 336-amino-acid chain: MSTPTGSRRIFSGVQPTSDSLHLGNALGAVAQWVGLQDDHDAFFCVVDLHAITIPQDPEALRRRTLITAAQYLALGIDPGRATIFVQSQVPAHTQLAWVLGCFTGFGQASRMTQFKDKSARQGSEATTVGLFTYPVLQAADVLAYDTELVPVGEDQRQHLELARDVAQRFNSRFPGTLVVPDVLIPKMTAKIYDLQDPTSKMSKSAGTDAGLINLLDDPALSAKKIRSAVTDSERDIRYDPDVKPGVSNLLNIQSAVTGTDIDVLVDGYAGHGYGDLKKDTAEAVVEFVNPIQARVDELTADPAELEAVLAAGAQRAHDVASKTVQRVYDRLGFLL.

ATP is bound by residues 15–17 and 24–25; these read QPT and GN. Residues 16–25 carry the 'HIGH' region motif; that stretch reads PTSDSLHLGN. D141 contacts L-tryptophan. ATP is bound by residues 153 to 155, I192, and 201 to 205; these read GED and KMSKS. A 'KMSKS' region motif is present at residues 201 to 205; sequence KMSKS.

This sequence belongs to the class-I aminoacyl-tRNA synthetase family. Homodimer.

It localises to the cytoplasm. The catalysed reaction is tRNA(Trp) + L-tryptophan + ATP = L-tryptophyl-tRNA(Trp) + AMP + diphosphate + H(+). Its function is as follows. Catalyzes the attachment of tryptophan to tRNA(Trp). The polypeptide is Tryptophan--tRNA ligase (Mycobacterium tuberculosis (strain CDC 1551 / Oshkosh)).